The primary structure comprises 546 residues: Probable protein kinase UbiB (546 aa).

The 379-residue stretch at 124 to 502 (DFDITPLASA…RVKQGQSRYL (379 aa)) folds into the Protein kinase domain. Residues 130–138 (LASASIAQV) and Lys153 contribute to the ATP site. Catalysis depends on Asp288, which acts as the Proton acceptor. 2 helical membrane passes run 501–518 (YLFG…LLFI) and 523–542 (WGMS…LIGW).

It belongs to the ABC1 family. UbiB subfamily.

It is found in the cell inner membrane. It participates in cofactor biosynthesis; ubiquinone biosynthesis [regulation]. Its function is as follows. Is probably a protein kinase regulator of UbiI activity which is involved in aerobic coenzyme Q (ubiquinone) biosynthesis. This Cronobacter sakazakii (strain ATCC BAA-894) (Enterobacter sakazakii) protein is Probable protein kinase UbiB.